The chain runs to 82 residues: Toxin GTx1-15 (82 aa).

Residues 1–21 form the signal peptide; sequence MKTSVVFVIAGLALLSVACYA. Residues 22–46 constitute a propeptide that is removed on maturation; that stretch reads SELKEQSSINEVLSTIFHFEQPEER. 3 cysteine pairs are disulfide-bonded: cysteine 48–cysteine 63, cysteine 55–cysteine 69, and cysteine 62–cysteine 76. Phenylalanine 80 is subject to Phenylalanine amide.

It belongs to the neurotoxin 10 (Hwtx-1) family. 08 (Gtx1-15) subfamily. Expressed by the venom gland.

It localises to the secreted. Its function is as follows. Potent voltage-gated sodium channel blocker. Potently inhibits the voltage-gated sodium channels Nav1.7/SCN9A (IC(50)=0.58-10 nM). Shows a moderate activity on Nav1.1/SCN1A (IC(50)=6 nM), Nav1.2/SCN2A (IC(50)=5-128 nM), Nav1.3/SCN3A (IC(50)=20.3-170 nM), and Nav1.6/SCN8A (IC(50)=17-20.1 nM). Shows an unclear inhibition of Nav1.4/SCN4A (IC(50)=200 nM to &gt;10 uM), Nav1.5/SCN5A (IC(50)=140 nM to &gt;10 uM) and Nav1.8/SCN10A (IC(50)=68-12200 nM). Weakly blocks the low voltage-gated calcium channels Cav3.1/CACNA1G (30% inhibition of the peak current by 9.8 nM of the toxin). It shows moderate affinity for lipid bilayers. The chain is Toxin GTx1-15 from Grammostola rosea (Chilean rose tarantula).